A 133-amino-acid chain; its full sequence is Small ribosomal subunit protein uS8 (133 aa).

Belongs to the universal ribosomal protein uS8 family. In terms of assembly, part of the 30S ribosomal subunit. Contacts proteins S5 and S12.

Functionally, one of the primary rRNA binding proteins, it binds directly to 16S rRNA central domain where it helps coordinate assembly of the platform of the 30S subunit. The chain is Small ribosomal subunit protein uS8 from Synechococcus sp. (strain WH7803).